Reading from the N-terminus, the 157-residue chain is Cyclic pyranopterin monophosphate synthase (157 aa).

Residues 74–76 (MCH) and 112–113 (ME) contribute to the substrate site. Asp-127 is a catalytic residue.

The protein belongs to the MoaC family. In terms of assembly, homohexamer; trimer of dimers.

It carries out the reaction (8S)-3',8-cyclo-7,8-dihydroguanosine 5'-triphosphate = cyclic pyranopterin phosphate + diphosphate. The protein operates within cofactor biosynthesis; molybdopterin biosynthesis. In terms of biological role, catalyzes the conversion of (8S)-3',8-cyclo-7,8-dihydroguanosine 5'-triphosphate to cyclic pyranopterin monophosphate (cPMP). The polypeptide is Cyclic pyranopterin monophosphate synthase (Campylobacter jejuni subsp. jejuni serotype O:23/36 (strain 81-176)).